Reading from the N-terminus, the 134-residue chain is Bet1-like protein At1g29060 (134 aa).

Gly residues predominate over residues 1-12; the sequence is MASNRGAGGSLY. The interval 1–31 is disordered; sequence MASNRGAGGSLYGGADPYRSREGLSTRNASG. At 1 to 110 the chain is on the cytoplasmic side; the sequence is MASNRGAGGS…LSIIRSGNNH (110 aa). Residues 40 to 102 enclose the t-SNARE coiled-coil homology domain; that stretch reads DPMHSDLDDE…KNNIRKLNLS (63 aa). A helical; Anchor for type IV membrane protein membrane pass occupies residues 111 to 131; it reads IMHVVLFALLLFFILYMWSKM. Residues 132–134 are Vesicular-facing; that stretch reads FKR.

It belongs to the BET1 family.

It localises to the golgi apparatus membrane. The protein localises to the endoplasmic reticulum membrane. Functionally, required for vesicular transport from the ER to the Golgi complex. Functions as a SNARE associated with ER-derived vesicles. This Arabidopsis thaliana (Mouse-ear cress) protein is Bet1-like protein At1g29060.